Reading from the N-terminus, the 645-residue chain is Threonine--tRNA ligase (645 aa).

The TGS domain maps to 1-61 (MPAITLPDGS…SSDASVKFIT (61 aa)). A catalytic region spans residues 243 to 536 (DHRRIGREMD…LIEQYAGKFP (294 aa)). Residues Cys-336, His-387, and His-513 each contribute to the Zn(2+) site.

This sequence belongs to the class-II aminoacyl-tRNA synthetase family. As to quaternary structure, homodimer. Zn(2+) is required as a cofactor.

It is found in the cytoplasm. The enzyme catalyses tRNA(Thr) + L-threonine + ATP = L-threonyl-tRNA(Thr) + AMP + diphosphate + H(+). Catalyzes the attachment of threonine to tRNA(Thr) in a two-step reaction: L-threonine is first activated by ATP to form Thr-AMP and then transferred to the acceptor end of tRNA(Thr). Also edits incorrectly charged L-seryl-tRNA(Thr). The protein is Threonine--tRNA ligase of Gluconobacter oxydans (strain 621H) (Gluconobacter suboxydans).